We begin with the raw amino-acid sequence, 140 residues long: Nucleoside diphosphate kinase (140 aa).

ATP-binding residues include Lys-11, Phe-59, Arg-87, Thr-93, Arg-104, and Asn-114. Catalysis depends on His-117, which acts as the Pros-phosphohistidine intermediate.

It belongs to the NDK family. As to quaternary structure, homotetramer. The cofactor is Mg(2+).

It localises to the cytoplasm. It carries out the reaction a 2'-deoxyribonucleoside 5'-diphosphate + ATP = a 2'-deoxyribonucleoside 5'-triphosphate + ADP. The catalysed reaction is a ribonucleoside 5'-diphosphate + ATP = a ribonucleoside 5'-triphosphate + ADP. Functionally, major role in the synthesis of nucleoside triphosphates other than ATP. The ATP gamma phosphate is transferred to the NDP beta phosphate via a ping-pong mechanism, using a phosphorylated active-site intermediate. The sequence is that of Nucleoside diphosphate kinase from Francisella tularensis subsp. holarctica (strain LVS).